Here is a 356-residue protein sequence, read N- to C-terminus: Protein pelota homolog (356 aa).

The protein belongs to the eukaryotic release factor 1 family. Pelota subfamily. Monomer. It depends on a divalent metal cation as a cofactor.

It localises to the cytoplasm. May function in recognizing stalled ribosomes, interact with stem-loop structures in stalled mRNA molecules, and effect endonucleolytic cleavage of the mRNA. May play a role in the release non-functional ribosomes and degradation of damaged mRNAs. Has endoribonuclease activity. This Staphylothermus marinus (strain ATCC 43588 / DSM 3639 / JCM 9404 / F1) protein is Protein pelota homolog.